The chain runs to 511 residues: 2,3-bisphosphoglycerate-independent phosphoglycerate mutase (511 aa).

Residues Asp12 and Ser62 each coordinate Mn(2+). The Phosphoserine intermediate role is filled by Ser62. Substrate is bound by residues His123, 154–155 (RD), Arg181, Arg187, 252–255 (RPDR), and Lys335. Residues Asp402, His406, Asp444, His445, and His462 each contribute to the Mn(2+) site.

This sequence belongs to the BPG-independent phosphoglycerate mutase family. As to quaternary structure, monomer. The cofactor is Mn(2+).

The catalysed reaction is (2R)-2-phosphoglycerate = (2R)-3-phosphoglycerate. The protein operates within carbohydrate degradation; glycolysis; pyruvate from D-glyceraldehyde 3-phosphate: step 3/5. In terms of biological role, catalyzes the interconversion of 2-phosphoglycerate and 3-phosphoglycerate. The protein is 2,3-bisphosphoglycerate-independent phosphoglycerate mutase of Acholeplasma laidlawii (strain PG-8A).